The chain runs to 703 residues: Glycogen [starch] synthase, liver (703 aa).

Ser-8 carries the phosphoserine; by PKA modification. Ser-11 is modified (phosphoserine). Lys-40 is a UDP binding site. Residues His-205 and Arg-211 each coordinate UDP-alpha-D-glucose. His-291, Glu-292, Gln-294, His-297, and Lys-301 together coordinate alpha-D-glucose 6-phosphate. Arg-331 provides a ligand contact to UDP. Position 331 (Arg-331) interacts with UDP-alpha-D-glucose. His-501 provides a ligand contact to alpha-D-glucose 6-phosphate. UDP-alpha-D-glucose contacts are provided by Glu-510, Trp-512, and Gly-513. Position 515 (Thr-515) interacts with UDP. Arg-582 and Arg-586 together coordinate alpha-D-glucose 6-phosphate. The residue at position 627 (Ser-627) is a Phosphoserine. A disordered region spans residues 628 to 703 (PPTTEGFKYP…KKKLHGEYKN (76 aa)). Phosphoserine; by GSK3-alpha and GSK3-beta is present on residues Ser-641, Ser-645, Ser-649, and Ser-653. Positions 647 to 657 (SGSQASSPQSS) are enriched in low complexity. The residue at position 657 (Ser-657) is a Phosphoserine; by CK2. Acidic residues predominate over residues 658–674 (DVEDEVEDERYDEEEEA). Ser-683 carries the phosphoserine modification.

This sequence belongs to the glycosyltransferase 3 family. As to quaternary structure, part of the glycogen synthase (GS)-glycogenin complex, a heterooctamer composed of a tetramer of GS and 2 dimers of glycogenin, where each GS protomer binds to one glycogenin subunit (via glycogenin C-terminus); the GS tetramer may dissociate from glycogenin dimers to continue glycogen polymerization on its own. May also form a heterooctamer complex with GYG1 (via GYG1 C-terminus). Primed phosphorylation at Ser-657 (site 5) by CSNK2A1 and CSNK2A2 is required for inhibitory phosphorylation at Ser-641 (site 3a), Ser-645 (site 3b), Ser-649 (site 3c) and Ser-653 (site 4) by GSK3A an GSK3B. Dephosphorylation at Ser-641 and Ser-645 by PP1 activates the enzyme. Phosphorylation at Ser-8 is not required for interaction with GYG1. Interaction with GYG1 does not regulate the phosphorylation at Ser-8 and Ser-641. In terms of tissue distribution, specifically expressed in liver (at protein level).

The enzyme catalyses [(1-&gt;4)-alpha-D-glucosyl](n) + UDP-alpha-D-glucose = [(1-&gt;4)-alpha-D-glucosyl](n+1) + UDP + H(+). Its pathway is glycan biosynthesis; glycogen biosynthesis. Its activity is regulated as follows. Allosteric activation by glucose-6-phosphate. Phosphorylation reduces the activity towards UDP-glucose. When in the non-phosphorylated state, glycogen synthase does not require glucose-6-phosphate as an allosteric activator; when phosphorylated it does. Functionally, glycogen synthase participates in the glycogen biosynthetic process along with glycogenin and glycogen branching enzyme. Extends the primer composed of a few glucose units formed by glycogenin by adding new glucose units to it. In this context, glycogen synthase transfers the glycosyl residue from UDP-Glc to the non-reducing end of alpha-1,4-glucan. The polypeptide is Glycogen [starch] synthase, liver (Homo sapiens (Human)).